A 151-amino-acid polypeptide reads, in one-letter code: MGMKSKFKRFFELDDDASMYEEDAVSRDFVEEVEEPRRRSRTGVKQERETGQNVVSLQSVQKTAKVVLLEPRTYDEAQEIADQLKNRKAVIINLQRISHEQAKRVVDFLSGTVYAIGGDIQKLGMNIFLCTPDNVDVTGTITDMIQDGYRS.

The segment at 31-53 is disordered; sequence EEVEEPRRRSRTGVKQERETGQN.

It belongs to the SepF family. Homodimer. Interacts with FtsZ.

Its subcellular location is the cytoplasm. Cell division protein that is part of the divisome complex and is recruited early to the Z-ring. Probably stimulates Z-ring formation, perhaps through the cross-linking of FtsZ protofilaments. Its function overlaps with FtsA. This Halalkalibacterium halodurans (strain ATCC BAA-125 / DSM 18197 / FERM 7344 / JCM 9153 / C-125) (Bacillus halodurans) protein is Cell division protein SepF.